Here is a 945-residue protein sequence, read N- to C-terminus: Isoleucine--tRNA ligase (945 aa).

Positions 66–76 (PYANGDIHLGH) match the 'HIGH' region motif. Glu-581 provides a ligand contact to L-isoleucyl-5'-AMP. The 'KMSKS' region motif lies at 622–626 (KMSKS). Residue Lys-625 coordinates ATP. Cys-908, Cys-911, Cys-928, and Cys-931 together coordinate Zn(2+).

The protein belongs to the class-I aminoacyl-tRNA synthetase family. IleS type 1 subfamily. In terms of assembly, monomer. Requires Zn(2+) as cofactor.

It localises to the cytoplasm. It catalyses the reaction tRNA(Ile) + L-isoleucine + ATP = L-isoleucyl-tRNA(Ile) + AMP + diphosphate. In terms of biological role, catalyzes the attachment of isoleucine to tRNA(Ile). As IleRS can inadvertently accommodate and process structurally similar amino acids such as valine, to avoid such errors it has two additional distinct tRNA(Ile)-dependent editing activities. One activity is designated as 'pretransfer' editing and involves the hydrolysis of activated Val-AMP. The other activity is designated 'posttransfer' editing and involves deacylation of mischarged Val-tRNA(Ile). In Burkholderia ambifaria (strain ATCC BAA-244 / DSM 16087 / CCUG 44356 / LMG 19182 / AMMD) (Burkholderia cepacia (strain AMMD)), this protein is Isoleucine--tRNA ligase.